The primary structure comprises 243 residues: Small ribosomal subunit protein eS4 (243 aa).

Positions 37–99 (IPLALLLKHY…SDLYFRIVPD (63 aa)) constitute an S4 RNA-binding domain.

This sequence belongs to the eukaryotic ribosomal protein eS4 family.

The protein is Small ribosomal subunit protein eS4 (rps4e) of Sulfurisphaera tokodaii (strain DSM 16993 / JCM 10545 / NBRC 100140 / 7) (Sulfolobus tokodaii).